A 165-amino-acid polypeptide reads, in one-letter code: Transcription antitermination protein NusB (165 aa).

The protein belongs to the NusB family.

Involved in transcription antitermination. Required for transcription of ribosomal RNA (rRNA) genes. Binds specifically to the boxA antiterminator sequence of the ribosomal RNA (rrn) operons. The chain is Transcription antitermination protein NusB from Bradyrhizobium diazoefficiens (strain JCM 10833 / BCRC 13528 / IAM 13628 / NBRC 14792 / USDA 110).